The following is a 1107-amino-acid chain: Probable chromatin-remodeling complex ATPase chain (1107 aa).

Disordered stretches follow at residues 1–124 (MAKP…KREK) and 177–217 (GNQS…GSGG). Composition is skewed to acidic residues over residues 8 to 25 (DEEEEEVSSSGEEEEEQS), 33 to 43 (GEEEDEEEEEA), 53 to 65 (GGEEEEVDEEEIE), and 89 to 114 (EGDEESQSTEDDEAVVGEDDDADEAE). A coiled-coil region spans residues 121–147 (KREKARLKEMQKLKKQKIQEILDTQNA). Over residues 183–193 (KKPRGRGRHAS) the composition is skewed to basic residues. Residues 197–211 (EEEEDEEYLKEEEDA) are compositionally biased toward acidic residues. The Helicase ATP-binding domain maps to 243 to 408 (IRLYENGING…WSLLNFLLPE (166 aa)). Position 256 to 263 (256 to 263 (DEMGLGKT)) interacts with ATP. The DEAH box motif lies at 359–362 (DEAH). The Helicase C-terminal domain occupies 536 to 687 (LLDKLLPKLK…ALVIQQGRLA (152 aa)). SANT domains lie at 877–929 (EGFA…ERYK) and 978–1039 (QNKG…DTLI). Positions 1029–1067 (QELARRCDTLIRLVEKENQEYDEQERQARKDKRMAKNMT) form a coiled coil. The disordered stretch occupies residues 1049 to 1107 (YDEQERQARKDKRMAKNMTPTKRSALRVSEGETTPSNSFKRRRQSLMDDYVGSGRRKRG).

It belongs to the SNF2/RAD54 helicase family. ISWI subfamily.

It is found in the nucleus. In terms of biological role, possesses intrinsic ATP-dependent nucleosome-remodeling activity. Constitutes the catalytic subunit of several complexes capable of forming ordered nucleosome arrays on chromatin in vitro. In Oryza sativa subsp. japonica (Rice), this protein is Probable chromatin-remodeling complex ATPase chain.